Reading from the N-terminus, the 161-residue chain is Protein-export protein SecB (161 aa).

This sequence belongs to the SecB family. As to quaternary structure, homotetramer, a dimer of dimers. One homotetramer interacts with 1 SecA dimer.

Its subcellular location is the cytoplasm. Its function is as follows. One of the proteins required for the normal export of preproteins out of the cell cytoplasm. It is a molecular chaperone that binds to a subset of precursor proteins, maintaining them in a translocation-competent state. It also specifically binds to its receptor SecA. This Shewanella sp. (strain ANA-3) protein is Protein-export protein SecB.